We begin with the raw amino-acid sequence, 110 residues long: ATP-dependent Clp protease adapter protein ClpS (110 aa).

It belongs to the ClpS family. In terms of assembly, binds to the N-terminal domain of the chaperone ClpA.

Functionally, involved in the modulation of the specificity of the ClpAP-mediated ATP-dependent protein degradation. This chain is ATP-dependent Clp protease adapter protein ClpS, found in Bartonella quintana (strain Toulouse) (Rochalimaea quintana).